The primary structure comprises 423 residues: Histidine--tRNA ligase (423 aa).

It belongs to the class-II aminoacyl-tRNA synthetase family. In terms of assembly, homodimer.

It localises to the cytoplasm. It catalyses the reaction tRNA(His) + L-histidine + ATP = L-histidyl-tRNA(His) + AMP + diphosphate + H(+). In Staphylococcus haemolyticus (strain JCSC1435), this protein is Histidine--tRNA ligase.